The primary structure comprises 150 residues: MKYQQLENLESGWKWKYLVKKHREGELITRYVEASAAQEAVNLLLALENEPVRVNVWIDRHMNPALLNRMRQTIRARRKRHFNAEHQHTRKKSIDLEFMVWQRLAGLAQRRGKTLSETIVQLIEDAEHKEKYATQMTTLKQDLQALLGKK.

The protein belongs to the MatP family. As to quaternary structure, homodimer.

Its subcellular location is the cytoplasm. Its function is as follows. Required for spatial organization of the terminus region of the chromosome (Ter macrodomain) during the cell cycle. Prevents early segregation of duplicated Ter macrodomains during cell division. Binds specifically to matS, which is a 13 bp signature motif repeated within the Ter macrodomain. In Salmonella typhi, this protein is Macrodomain Ter protein.